Reading from the N-terminus, the 442-residue chain is tRNA(Ile)-lysidine synthase (442 aa).

27-32 is a binding site for ATP; that stretch reads SGGLDS.

Belongs to the tRNA(Ile)-lysidine synthase family.

The protein localises to the cytoplasm. It catalyses the reaction cytidine(34) in tRNA(Ile2) + L-lysine + ATP = lysidine(34) in tRNA(Ile2) + AMP + diphosphate + H(+). Functionally, ligates lysine onto the cytidine present at position 34 of the AUA codon-specific tRNA(Ile) that contains the anticodon CAU, in an ATP-dependent manner. Cytidine is converted to lysidine, thus changing the amino acid specificity of the tRNA from methionine to isoleucine. The chain is tRNA(Ile)-lysidine synthase from Photorhabdus laumondii subsp. laumondii (strain DSM 15139 / CIP 105565 / TT01) (Photorhabdus luminescens subsp. laumondii).